Consider the following 809-residue polypeptide: Phenylalanine--tRNA ligase beta subunit (809 aa).

A tRNA-binding domain is found at 39–152; it reads KDKWPNVYVG…ADALVGMLAS (114 aa). The B5 domain occupies 404 to 492; that stretch reads KERNGIVLSL…RIAGYHTIPC (89 aa). Asp-470, Asp-476, Glu-479, and Glu-480 together coordinate Mg(2+). One can recognise an FDX-ACB domain in the interval 717–808; that stretch reads NRFPAVERDL…LNTETGAVLR (92 aa).

Belongs to the phenylalanyl-tRNA synthetase beta subunit family. Type 1 subfamily. Tetramer of two alpha and two beta subunits. Requires Mg(2+) as cofactor.

The protein resides in the cytoplasm. It carries out the reaction tRNA(Phe) + L-phenylalanine + ATP = L-phenylalanyl-tRNA(Phe) + AMP + diphosphate + H(+). The sequence is that of Phenylalanine--tRNA ligase beta subunit from Dehalococcoides mccartyi (strain CBDB1).